Reading from the N-terminus, the 146-residue chain is Flagellar assembly factor FliW (146 aa).

It belongs to the FliW family. In terms of assembly, interacts with translational regulator CsrA and flagellin(s).

It is found in the cytoplasm. Its function is as follows. Acts as an anti-CsrA protein, binds CsrA and prevents it from repressing translation of its target genes, one of which is flagellin. Binds to flagellin and participates in the assembly of the flagellum. The polypeptide is Flagellar assembly factor FliW (Shouchella clausii (strain KSM-K16) (Alkalihalobacillus clausii)).